Reading from the N-terminus, the 419-residue chain is Appendage-associated protein (419 aa).

Positions 1 to 39 (MIVTYGTVGCPVSRGGSPGCGRRIAEELRLAEDARLRLA) are cleaved as a signal peptide. Residues 232–262 (ERQKAQRRREERAAKAREELRKELNDIDAKW) adopt a coiled-coil conformation.

The protein resides in the secreted. Functionally, associates with actin filament appendages that are formed in the inclusion appendages of the parasitophorous vacuole during infection of the host erythrocyte. This chain is Appendage-associated protein, found in Anaplasma marginale (strain St. Maries).